The chain runs to 554 residues: Glucose-6-phosphate isomerase (554 aa).

Glutamate 358 acts as the Proton donor in catalysis. Active-site residues include histidine 389 and lysine 515. Positions 527–540 (SDGSPQRQSDSSTD) are enriched in polar residues. Residues 527–554 (SDGSPQRQSDSSTDALVRRYRTQRGRTG) are disordered. The segment covering 544-554 (RRYRTQRGRTG) has biased composition (basic residues).

Belongs to the GPI family.

It is found in the cytoplasm. The enzyme catalyses alpha-D-glucose 6-phosphate = beta-D-fructose 6-phosphate. Its pathway is carbohydrate biosynthesis; gluconeogenesis. It participates in carbohydrate degradation; glycolysis; D-glyceraldehyde 3-phosphate and glycerone phosphate from D-glucose: step 2/4. Functionally, catalyzes the reversible isomerization of glucose-6-phosphate to fructose-6-phosphate. This is Glucose-6-phosphate isomerase from Mycobacterium ulcerans (strain Agy99).